A 216-amino-acid chain; its full sequence is Inactive ribonuclease-like protein 10 (216 aa).

Positions 1-26 are cleaved as a signal peptide; that stretch reads MKLNLVQIFFMLLMLLLGLGMGLGLG. The segment at 43–65 is disordered; that stretch reads EFWSSDSQDKAEATEEGDGTQTT.

This sequence belongs to the pancreatic ribonuclease family. Post-translationally, the N-terminus is blocked. Glycosylated.

The protein resides in the secreted. Its function is as follows. Secreted proximal epididymal protein required for post-testicular sperm maturation and male fertility. May be involved in sperm adhesion to the egg zona pellucida. Does not have ribonuclease activity. The sequence is that of Inactive ribonuclease-like protein 10 (RNASE10) from Homo sapiens (Human).